Consider the following 231-residue polypeptide: Urease subunit gamma/beta (231 aa).

Residues 1 to 101 (MLLTPTELER…LVTVHQPIRP (101 aa)) form a urease gamma region. Positions 102–231 (GQLPLAVMPT…RARAQFFKGA (130 aa)) are urease beta.

In the N-terminal section; belongs to the urease gamma subunit family. It in the C-terminal section; belongs to the urease beta subunit family. Heterohexamer of 3 UreC (alpha) and 3 UreAB (gamma/beta) subunits.

The protein localises to the cytoplasm. It catalyses the reaction urea + 2 H2O + H(+) = hydrogencarbonate + 2 NH4(+). The protein operates within nitrogen metabolism; urea degradation; CO(2) and NH(3) from urea (urease route): step 1/1. The chain is Urease subunit gamma/beta from Pseudomonas syringae pv. syringae (strain B728a).